A 508-amino-acid chain; its full sequence is MNKKLKDVLLKLDQDLIKHVKGSLDLEISGVTYSSKLVLPRYVFFALPGIRFDGHDFIETAIQKGSNVIVCSRDMDFYSPNVTYIKVDDFNIRKFMSNFSNIFYDEPSKKLKVIGVTGTDGKSSVCYYIYLLLKKKGVKVGFISTVFFDDGNGSLIKNPYRQSTPESTEIHLFLSNMVKNNVQYAILESTSHGLDLKTARLIDVNYFAVVFTNIGHEHLEFHGTIQNYLNAKLGLFRSVSDDAGFGVINFDDPYYSDFKNAVKKSFTYSLKSSKADFFVSFIDEKIDSTRFEFYHKGVKYFANVSLLGSFNVENIMAALILVSQILNSDIQDIVDKLICIKSLDGRMDSVNLGQNFSVIIDYAHTPGAFSKLFPIFKRFATNRLISVFGSAGERDVAKRFLQGQIADIYSDLIVLCDEDPRGENSMYIIKDIAKGIVNKVVNQDLFFIPDRRLAIEKAISLARAGDLVVALGKGHENSIIYKNKELFWNEQEAVKNAILSLEESEKDR.

S35 lines the UDP-N-acetyl-alpha-D-muramoyl-L-alanyl-D-glutamate pocket. 118–124 contacts ATP; the sequence is GTDGKSS. UDP-N-acetyl-alpha-D-muramoyl-L-alanyl-D-glutamate contacts are provided by residues 163–164, T190, and R200; that span reads ST. Position 232 is an N6-carboxylysine (K232).

The protein belongs to the MurCDEF family. MurE subfamily. In terms of processing, carboxylation is probably crucial for Mg(2+) binding and, consequently, for the gamma-phosphate positioning of ATP.

The protein localises to the cytoplasm. It functions in the pathway cell wall biogenesis; peptidoglycan biosynthesis. In terms of biological role, catalyzes the addition of an amino acid to the nucleotide precursor UDP-N-acetylmuramoyl-L-alanyl-D-glutamate (UMAG) in the biosynthesis of bacterial cell-wall peptidoglycan. In Borrelia garinii subsp. bavariensis (strain ATCC BAA-2496 / DSM 23469 / PBi) (Borreliella bavariensis), this protein is UDP-N-acetylmuramyl-tripeptide synthetase.